The primary structure comprises 455 residues: MIEFLALITLISRANALMRPDGVGRLPALGWSSWNAHECDINATVILTAAAQVVKLGLKDLGYEYINIDDCWSIKTHRDPTTNRMIPDADRFPDGIASVASQIHELGLKVGIYSSAGETTCAGYPASLGYEDIDAETFAEWEIDYLKYDDCGVPDNWKDPYTFCVPDTANNAGPFPNGTCPSLPNPAPANYNWSTSPSAERFRRMLDALNTQDRTILYSLCNWGNAAVNTWGAEIGNSWRMSGDISPGRGEVGPDRTRIAVWERIAEITNEMSFLVREYAEFWGWPDADMLEVGNGEGGMTVAENRAHFALWAAMRSPLLIGTKLDTIRQEHLKILKNPTLLTFHQDPIINRPAYPYKWGYNADYTFDAAHPAEYWSGPSPALEGTLVVMLNSENVTSTRMAVWSEVPELQNQDQGDAFEVMDGWTGEDLGCIKEKYEVELDAHDAAVLVVGNAC.

A signal peptide spans 1–16; sequence MIEFLALITLISRANA. 2 cysteine pairs are disulfide-bonded: cysteine 39–cysteine 71 and cysteine 121–cysteine 151. Asparagine 42 carries an N-linked (GlcNAc...) asparagine glycan. Aspartate 149 serves as the catalytic Nucleophile. Residues asparagine 177 and asparagine 192 are each glycosylated (N-linked (GlcNAc...) asparagine). 222–226 serves as a coordination point for substrate; the sequence is NWGNA. Residue aspartate 244 is the Proton donor of the active site. An N-linked (GlcNAc...) asparagine glycan is attached at asparagine 395.

It belongs to the glycosyl hydrolase 27 family.

It is found in the secreted. It catalyses the reaction Hydrolysis of terminal, non-reducing alpha-D-galactose residues in alpha-D-galactosides, including galactose oligosaccharides, galactomannans and galactolipids.. Its function is as follows. Hydrolyzes a variety of simple alpha-D-galactoside as well as more complex molecules such as oligosaccharides and polysaccharides. This Emericella nidulans (strain FGSC A4 / ATCC 38163 / CBS 112.46 / NRRL 194 / M139) (Aspergillus nidulans) protein is Probable alpha-galactosidase B (aglB).